A 348-amino-acid polypeptide reads, in one-letter code: MNMNTAPKQYGFYMPAEWYPHERCWMAWPCHHETWSKIGLDKAKMAYARVAKAIAQFEPVTLLVNPGDEDSAENLCKGHNIEIISLPINDSWTRDTGATFLINNERQLAGVDWIHNAWGGNYADCSLDNLIASHLIKYTEAQYFHAPLVMEGGSFHVDGEGTILTSKECLLNSNRNPHLSQQEIEQYLINYLGAERIIWLNMGLIGDETDGHVDEIATFIAPGKVLCLITKDKEDPNYHRLQENFEILKSSKDARGRTFEVYTVEQPPATYLNGERLTLSYINFYMANQGIVMPAFGYESFDRLAYQLFVQIFPGYQITQIDALDVFSGGGGIHCITQQQPKSHKLVE.

Cys335 serves as the catalytic Amidino-cysteine intermediate.

This sequence belongs to the agmatine deiminase family.

The enzyme catalyses agmatine + H2O = N-carbamoylputrescine + NH4(+). The protein is Putative agmatine deiminase of Legionella pneumophila subsp. pneumophila (strain Philadelphia 1 / ATCC 33152 / DSM 7513).